The following is a 361-amino-acid chain: FK506-binding protein 39 kDa (361 aa).

Positions 122 to 256 (LVDEEDEEEE…PSSPKTRTLK (135 aa)) are disordered. The segment covering 123–174 (VDEEDEEEEESDEDYDLSPTEEDLVETVSGDEESEEESESEDNSASEEDELD) has biased composition (acidic residues). Serine 192 carries the phosphoserine modification. Basic and acidic residues predominate over residues 208-227 (QKVEGTPVKEKKVAFAEKLE). Position 213 is a phosphothreonine (threonine 213). The span at 241–252 (QASSNAPSSPKT) shows a compositional bias: polar residues. Serine 249 carries the phosphoserine modification. The region spanning 275–361 (GKKVEMRYIG…VFEVKLVRVH (87 aa)) is the PPIase FKBP-type domain.

It belongs to the FKBP-type PPIase family. FKBP3/4 subfamily.

It localises to the nucleus. It is found in the nucleolus. It catalyses the reaction [protein]-peptidylproline (omega=180) = [protein]-peptidylproline (omega=0). PPIase that acts as a histone chaperone. Histone proline isomerase that increases the rate of cis-trans isomerization at prolines on the histone H3 N-terminal tail. Proline isomerization influences H3 methylation thereby regulating gene expression. In Schizosaccharomyces pombe (strain 972 / ATCC 24843) (Fission yeast), this protein is FK506-binding protein 39 kDa.